The primary structure comprises 256 residues: PHD finger protein ALFIN-LIKE 6 (256 aa).

The interval 144-200 (SKDLSVNNNNSKSKPSGVKSRQSESLSKVAKMSSPPPKEEEEEEDESEDESEDDEQG) is disordered. A compositionally biased stretch (low complexity) spans 146–163 (DLSVNNNNSKSKPSGVKS). Residues 182–199 (EEEEEEDESEDESEDDEQ) show a composition bias toward acidic residues. Residues 200-252 (GAVCGACGDNYGTDEFWICCDACEKWFHGKCVKITPAKAEHIKHYKCPTCSNK) form a PHD-type zinc finger.

It belongs to the Alfin family. In terms of assembly, interacts with H3K4me3 and to a lesser extent with H3K4me2. In terms of tissue distribution, ubiquitously expressed.

It is found in the nucleus. Its function is as follows. Histone-binding component that specifically recognizes H3 tails trimethylated on 'Lys-4' (H3K4me3), which mark transcription start sites of virtually all active genes. This is PHD finger protein ALFIN-LIKE 6 (AL6) from Arabidopsis thaliana (Mouse-ear cress).